Consider the following 40-residue polypeptide: Ostricacin-3 (40 aa).

3 cysteine pairs are disulfide-bonded: Cys-8-Cys-36, Cys-15-Cys-30, and Cys-20-Cys-37.

The protein localises to the secreted. Its function is as follows. Has antibacterial activity against the Gram-positive bacterium S.aureus 1056 MRSA (MIC=2.78 ug/ml) and the Gram-negative bacterium E.coli O157:H7 (MIC=2.41 ug/ml). Does not have antifungal activity against the yeast C.albicans 3153A. The sequence is that of Ostricacin-3 from Struthio camelus (Common ostrich).